The following is a 133-amino-acid chain: ATP synthase epsilon chain, chloroplastic (133 aa).

Belongs to the ATPase epsilon chain family. In terms of assembly, F-type ATPases have 2 components, CF(1) - the catalytic core - and CF(0) - the membrane proton channel. CF(1) has five subunits: alpha(3), beta(3), gamma(1), delta(1), epsilon(1). CF(0) has three main subunits: a, b and c.

The protein localises to the plastid. It is found in the chloroplast thylakoid membrane. Functionally, produces ATP from ADP in the presence of a proton gradient across the membrane. The protein is ATP synthase epsilon chain, chloroplastic of Psilotum nudum (Whisk fern).